Here is a 364-residue protein sequence, read N- to C-terminus: Dual-specificity RNA methyltransferase RlmN (364 aa).

The active-site Proton acceptor is the E91. The 237-residue stretch at 97-333 folds into the Radical SAM core domain; it reads ESDRGTLCIS…VTVRKTRGDD (237 aa). A disulfide bond links C104 and C338. C111, C115, and C118 together coordinate [4Fe-4S] cluster. Residues 164-165, S196, 218-220, and N295 each bind S-adenosyl-L-methionine; these read GE and SLH. C338 functions as the S-methylcysteine intermediate in the catalytic mechanism.

The protein belongs to the radical SAM superfamily. RlmN family. The cofactor is [4Fe-4S] cluster.

Its subcellular location is the cytoplasm. The catalysed reaction is adenosine(2503) in 23S rRNA + 2 reduced [2Fe-2S]-[ferredoxin] + 2 S-adenosyl-L-methionine = 2-methyladenosine(2503) in 23S rRNA + 5'-deoxyadenosine + L-methionine + 2 oxidized [2Fe-2S]-[ferredoxin] + S-adenosyl-L-homocysteine. The enzyme catalyses adenosine(37) in tRNA + 2 reduced [2Fe-2S]-[ferredoxin] + 2 S-adenosyl-L-methionine = 2-methyladenosine(37) in tRNA + 5'-deoxyadenosine + L-methionine + 2 oxidized [2Fe-2S]-[ferredoxin] + S-adenosyl-L-homocysteine. Functionally, specifically methylates position 2 of adenine 2503 in 23S rRNA and position 2 of adenine 37 in tRNAs. m2A2503 modification seems to play a crucial role in the proofreading step occurring at the peptidyl transferase center and thus would serve to optimize ribosomal fidelity. The polypeptide is Dual-specificity RNA methyltransferase RlmN (Neisseria meningitidis serogroup A / serotype 4A (strain DSM 15465 / Z2491)).